Here is a 170-residue protein sequence, read N- to C-terminus: Crossover junction endodeoxyribonuclease RuvC (170 aa).

Catalysis depends on residues Asp8, Glu67, and Asp139. 3 residues coordinate Mg(2+): Asp8, Glu67, and Asp139.

This sequence belongs to the RuvC family. Homodimer which binds Holliday junction (HJ) DNA. The HJ becomes 2-fold symmetrical on binding to RuvC with unstacked arms; it has a different conformation from HJ DNA in complex with RuvA. In the full resolvosome a probable DNA-RuvA(4)-RuvB(12)-RuvC(2) complex forms which resolves the HJ. It depends on Mg(2+) as a cofactor.

Its subcellular location is the cytoplasm. It catalyses the reaction Endonucleolytic cleavage at a junction such as a reciprocal single-stranded crossover between two homologous DNA duplexes (Holliday junction).. Functionally, the RuvA-RuvB-RuvC complex processes Holliday junction (HJ) DNA during genetic recombination and DNA repair. Endonuclease that resolves HJ intermediates. Cleaves cruciform DNA by making single-stranded nicks across the HJ at symmetrical positions within the homologous arms, yielding a 5'-phosphate and a 3'-hydroxyl group; requires a central core of homology in the junction. The consensus cleavage sequence is 5'-(A/T)TT(C/G)-3'. Cleavage occurs on the 3'-side of the TT dinucleotide at the point of strand exchange. HJ branch migration catalyzed by RuvA-RuvB allows RuvC to scan DNA until it finds its consensus sequence, where it cleaves and resolves the cruciform DNA. In Pectobacterium atrosepticum (strain SCRI 1043 / ATCC BAA-672) (Erwinia carotovora subsp. atroseptica), this protein is Crossover junction endodeoxyribonuclease RuvC.